The primary structure comprises 483 residues: Cobyric acid synthase (483 aa).

In terms of domain architecture, GATase cobBQ-type spans 252 to 439 (KLKVVVPVLT…LHGFLDSEAV (188 aa)). The Nucleophile role is filled by cysteine 333. Histidine 431 is an active-site residue.

This sequence belongs to the CobB/CobQ family. CobQ subfamily.

The protein operates within cofactor biosynthesis; adenosylcobalamin biosynthesis. Its function is as follows. Catalyzes amidations at positions B, D, E, and G on adenosylcobyrinic A,C-diamide. NH(2) groups are provided by glutamine, and one molecule of ATP is hydrogenolyzed for each amidation. This is Cobyric acid synthase from Vibrio vulnificus (strain CMCP6).